A 107-amino-acid polypeptide reads, in one-letter code: uncharacterized protein (107 aa).

The chain crosses the membrane as a helical span at residues 62-79 (LLVVIVYYFSHVGSFSLA).

Its subcellular location is the nucleus membrane. This is an uncharacterized protein from Schizosaccharomyces pombe (strain 972 / ATCC 24843) (Fission yeast).